The sequence spans 256 residues: Trypsin, alkaline A (256 aa).

An N-terminal signal peptide occupies residues 1–17 (MRLFLALLALGFAAVAA). Residues 18 to 24 (VPAYPQR) constitute a propeptide, activation peptide. Residues 25–256 (IVGGSTTTIQ…RFANWIRNNS (232 aa)) enclose the Peptidase S1 domain. Cysteines 55 and 71 form a disulfide. Residues histidine 70 and aspartate 115 each act as charge relay system in the active site. 2 disulfides stabilise this stretch: cysteine 180/cysteine 197 and cysteine 209/cysteine 233. Serine 213 (charge relay system) is an active-site residue.

This sequence belongs to the peptidase S1 family. Midgut.

It is found in the secreted. The protein resides in the extracellular space. It carries out the reaction Preferential cleavage: Arg-|-Xaa, Lys-|-Xaa.. The chain is Trypsin, alkaline A from Manduca sexta (Tobacco hawkmoth).